We begin with the raw amino-acid sequence, 463 residues long: uncharacterized protein (463 aa).

The 69-residue stretch at 13 to 81 (IPLYQQLYRY…PRSGWFADYH (69 aa)) folds into the HTH gntR-type domain. The H-T-H motif DNA-binding region spans 41-60 (KRLLANQLSISQTTVERAYE). Lys-308 bears the N6-(pyridoxal phosphate)lysine mark.

The protein in the C-terminal section; belongs to the class-I pyridoxal-phosphate-dependent aminotransferase family. The cofactor is pyridoxal 5'-phosphate.

This is an uncharacterized protein from Bacillus subtilis (strain 168).